A 545-amino-acid polypeptide reads, in one-letter code: Chaperonin GroEL 2 (545 aa).

ATP contacts are provided by residues 30 to 33, Lys-51, 87 to 91, Gly-415, and Asp-494; these read TLGP and DGTTT. Residues 526–545 are disordered; it reads EKGAGMPGMPPGGGYPGMGM. Residues 536–545 show a composition bias toward gly residues; that stretch reads PGGGYPGMGM.

The protein belongs to the chaperonin (HSP60) family. In terms of assembly, forms a cylinder of 14 subunits composed of two heptameric rings stacked back-to-back. Interacts with the co-chaperonin GroES.

The protein localises to the cytoplasm. It catalyses the reaction ATP + H2O + a folded polypeptide = ADP + phosphate + an unfolded polypeptide.. Functionally, together with its co-chaperonin GroES, plays an essential role in assisting protein folding. The GroEL-GroES system forms a nano-cage that allows encapsulation of the non-native substrate proteins and provides a physical environment optimized to promote and accelerate protein folding. The sequence is that of Chaperonin GroEL 2 from Syntrophus aciditrophicus (strain SB).